We begin with the raw amino-acid sequence, 885 residues long: Leucine--tRNA ligase (885 aa).

The 'HIGH' region signature appears at 48 to 58; the sequence is PYPSGKLHMGH. A 'KMSKS' region motif is present at residues 639–643; sequence TMSKS. An ATP-binding site is contributed by K642.

It belongs to the class-I aminoacyl-tRNA synthetase family.

The protein localises to the cytoplasm. The enzyme catalyses tRNA(Leu) + L-leucine + ATP = L-leucyl-tRNA(Leu) + AMP + diphosphate. The sequence is that of Leucine--tRNA ligase from Bordetella pertussis (strain Tohama I / ATCC BAA-589 / NCTC 13251).